Here is a 460-residue protein sequence, read N- to C-terminus: Bifunctional protein GlmU (460 aa).

The interval 1 to 232 is pyrophosphorylase; the sequence is MALNVVILAA…AIEVEGANNR (232 aa). UDP-N-acetyl-alpha-D-glucosamine contacts are provided by residues 8–11, Lys22, Gln73, 78–79, 100–102, Gly137, Glu157, Asn172, and Asn230; these read LAAG, GT, and YGD. Asp102 is a binding site for Mg(2+). Asn230 contacts Mg(2+). A linker region spans residues 233–253; that stretch reads VQLAQLERAYQAREAEKLMLA. Residues 254-460 form an N-acetyltransferase region; the sequence is GANLRDPSRI…GWQRPVKIKK (207 aa). UDP-N-acetyl-alpha-D-glucosamine contacts are provided by Arg336 and Lys354. His366 acts as the Proton acceptor in catalysis. UDP-N-acetyl-alpha-D-glucosamine is bound by residues Tyr369 and Asn380. Residues Ala383, 389–390, Ser408, Ala426, and Arg443 each bind acetyl-CoA; that span reads NY.

The protein in the N-terminal section; belongs to the N-acetylglucosamine-1-phosphate uridyltransferase family. In the C-terminal section; belongs to the transferase hexapeptide repeat family. As to quaternary structure, homotrimer. Mg(2+) serves as cofactor.

The protein localises to the cytoplasm. The catalysed reaction is alpha-D-glucosamine 1-phosphate + acetyl-CoA = N-acetyl-alpha-D-glucosamine 1-phosphate + CoA + H(+). The enzyme catalyses N-acetyl-alpha-D-glucosamine 1-phosphate + UTP + H(+) = UDP-N-acetyl-alpha-D-glucosamine + diphosphate. The protein operates within nucleotide-sugar biosynthesis; UDP-N-acetyl-alpha-D-glucosamine biosynthesis; N-acetyl-alpha-D-glucosamine 1-phosphate from alpha-D-glucosamine 6-phosphate (route II): step 2/2. It functions in the pathway nucleotide-sugar biosynthesis; UDP-N-acetyl-alpha-D-glucosamine biosynthesis; UDP-N-acetyl-alpha-D-glucosamine from N-acetyl-alpha-D-glucosamine 1-phosphate: step 1/1. It participates in bacterial outer membrane biogenesis; LPS lipid A biosynthesis. Catalyzes the last two sequential reactions in the de novo biosynthetic pathway for UDP-N-acetylglucosamine (UDP-GlcNAc). The C-terminal domain catalyzes the transfer of acetyl group from acetyl coenzyme A to glucosamine-1-phosphate (GlcN-1-P) to produce N-acetylglucosamine-1-phosphate (GlcNAc-1-P), which is converted into UDP-GlcNAc by the transfer of uridine 5-monophosphate (from uridine 5-triphosphate), a reaction catalyzed by the N-terminal domain. The chain is Bifunctional protein GlmU from Shewanella baltica (strain OS155 / ATCC BAA-1091).